Consider the following 471-residue polypeptide: E3 ubiquitin-protein ligase TRIM38 (471 aa).

The segment at 16-62 adopts an RING-type zinc-finger fold; sequence CSICKAMMSHPVSINCGHSYCKSCIQSYYCNVSPKTGWKMLGCPLCS. A B box-type zinc finger spans residues 90–131; the sequence is DQDMVCEEHEEKFNRFCEDDGQLLCWRCYWEDRHKGHTLAHV. Zn(2+)-binding residues include Cys95, His98, Cys117, and His123. The 196-residue stretch at 276-471 folds into the B30.2/SPRY domain; the sequence is CNVSELYFDV…PLFLPAINNQ (196 aa).

As to quaternary structure, interacts (via B30.2/SPRY domain) with TAB2 and TAB3.

The protein resides in the cytoplasm. It catalyses the reaction S-ubiquitinyl-[E2 ubiquitin-conjugating enzyme]-L-cysteine + [acceptor protein]-L-lysine = [E2 ubiquitin-conjugating enzyme]-L-cysteine + N(6)-ubiquitinyl-[acceptor protein]-L-lysine.. It functions in the pathway protein modification; protein ubiquitination. It participates in protein modification; protein sumoylation. Functionally, E3 ubiquitin-protein and E3 SUMO-protein ligase that acts as a regulator of innate immunity. Acts as a negative regulator of type I interferon IFN-beta production by catalyzing 'Lys-48'-linked polyubiquitination of AZI2/NAP1, leading to its degradation. Mediates 'Lys-48'-linked polyubiquitination and proteasomal degradation of the critical TLR adapter TICAM1, inhibiting TLR3-mediated type I interferon signaling. Acts as a positive regulator of the cGAS-STING pathway by acting as a E3 SUMO-protein ligase: mediates sumoylation of CGAS and STING, preventing their degradation and thereby activating the innate immune response to DNA virus. Also acts as a negative regulator of NF-kappa-B signaling independently of its E3 protein ligase activity by promoting lysosome-dependent degradation of TAB2 and TAB3 adapters. In Mus musculus (Mouse), this protein is E3 ubiquitin-protein ligase TRIM38.